The sequence spans 145 residues: UPF0763 protein CFF8240_1572 (145 aa).

It belongs to the UPF0763 family.

This chain is UPF0763 protein CFF8240_1572, found in Campylobacter fetus subsp. fetus (strain 82-40).